We begin with the raw amino-acid sequence, 279 residues long: Large ribosomal subunit protein uL2 (279 aa).

The tract at residues 224-279 (AMNAVDHPMGGGRGHSKGGNIPRSPWNQPSRGLKTRPKKSWDWMIVSDRRKNKAGK) is disordered.

Belongs to the universal ribosomal protein uL2 family. Part of the 50S ribosomal subunit. Forms a bridge to the 30S subunit in the 70S ribosome.

Functionally, one of the primary rRNA binding proteins. Required for association of the 30S and 50S subunits to form the 70S ribosome, for tRNA binding and peptide bond formation. It has been suggested to have peptidyltransferase activity; this is somewhat controversial. Makes several contacts with the 16S rRNA in the 70S ribosome. The chain is Large ribosomal subunit protein uL2 from Elusimicrobium minutum (strain Pei191).